A 395-amino-acid chain; its full sequence is Major outer membrane protein P.IA (395 aa).

The signal sequence occupies residues 1–19 (MRKKLTALVLSALPLAAVA).

The protein belongs to the Gram-negative porin family. In terms of assembly, homotrimer.

It is found in the cell outer membrane. Its function is as follows. Serves as a slightly cation selective porin. Major antigen on the gonococcal cell surface and it may have pathogenic properties in addition to its porin activity. The polypeptide is Major outer membrane protein P.IA (porA) (Neisseria meningitidis serogroup A / serotype 4A (strain DSM 15465 / Z2491)).